Here is a 185-residue protein sequence, read N- to C-terminus: Elongation factor P (185 aa).

It belongs to the elongation factor P family.

The protein resides in the cytoplasm. The protein operates within protein biosynthesis; polypeptide chain elongation. Its function is as follows. Involved in peptide bond synthesis. Stimulates efficient translation and peptide-bond synthesis on native or reconstituted 70S ribosomes in vitro. Probably functions indirectly by altering the affinity of the ribosome for aminoacyl-tRNA, thus increasing their reactivity as acceptors for peptidyl transferase. In Brevibacillus brevis (strain 47 / JCM 6285 / NBRC 100599), this protein is Elongation factor P.